The primary structure comprises 307 residues: Coproporphyrin III ferrochelatase (307 aa).

Fe-coproporphyrin III is bound by residues Y12, R29, 45–46, S53, and Y124; that span reads RY. Fe(2+)-binding residues include H181 and E263.

Belongs to the ferrochelatase family.

Its subcellular location is the cytoplasm. It catalyses the reaction Fe-coproporphyrin III + 2 H(+) = coproporphyrin III + Fe(2+). It functions in the pathway porphyrin-containing compound metabolism; protoheme biosynthesis. Its function is as follows. Involved in coproporphyrin-dependent heme b biosynthesis. Catalyzes the insertion of ferrous iron into coproporphyrin III to form Fe-coproporphyrin III. This is Coproporphyrin III ferrochelatase from Staphylococcus epidermidis (strain ATCC 12228 / FDA PCI 1200).